Consider the following 148-residue polypeptide: Transcriptional regulator MraZ (148 aa).

2 SpoVT-AbrB domains span residues 5–51 (STQL…PQPV) and 80–123 (ASDV…DMAK).

Belongs to the MraZ family. Forms oligomers.

Its subcellular location is the cytoplasm. The protein localises to the nucleoid. The protein is Transcriptional regulator MraZ of Nitrosomonas europaea (strain ATCC 19718 / CIP 103999 / KCTC 2705 / NBRC 14298).